We begin with the raw amino-acid sequence, 233 residues long: 5'-methylthioadenosine/S-adenosylhomocysteine nucleosidase (233 aa).

Glutamate 12 (proton acceptor) is an active-site residue. Residues glycine 78, isoleucine 156, and 177–178 (ME) contribute to the substrate site. Aspartate 201 functions as the Proton donor in the catalytic mechanism.

This sequence belongs to the PNP/UDP phosphorylase family. MtnN subfamily.

The enzyme catalyses S-adenosyl-L-homocysteine + H2O = S-(5-deoxy-D-ribos-5-yl)-L-homocysteine + adenine. It catalyses the reaction S-methyl-5'-thioadenosine + H2O = 5-(methylsulfanyl)-D-ribose + adenine. The catalysed reaction is 5'-deoxyadenosine + H2O = 5-deoxy-D-ribose + adenine. It participates in amino-acid biosynthesis; L-methionine biosynthesis via salvage pathway; S-methyl-5-thio-alpha-D-ribose 1-phosphate from S-methyl-5'-thioadenosine (hydrolase route): step 1/2. Functionally, catalyzes the irreversible cleavage of the glycosidic bond in both 5'-methylthioadenosine (MTA) and S-adenosylhomocysteine (SAH/AdoHcy) to adenine and the corresponding thioribose, 5'-methylthioribose and S-ribosylhomocysteine, respectively. Also cleaves 5'-deoxyadenosine, a toxic by-product of radical S-adenosylmethionine (SAM) enzymes, into 5-deoxyribose and adenine. The sequence is that of 5'-methylthioadenosine/S-adenosylhomocysteine nucleosidase from Listeria monocytogenes serotype 4a (strain HCC23).